Reading from the N-terminus, the 379-residue chain is MEQLRVLEFYSGIGGMHYGLQESGVDFQVIQSFDINTNANLNYKYTFNEDSSQKSIESYSVEELEGFKANAWLMSPPCQPFTRLGLQKDDQDNRTNSFFHLLDVLTKIKDPPTYILIENVFGFAKKGSSNTRDHLLDTLIKMNYSFQEFHLSPQQFGLANQRLRYFCIAKRNGKLNFKKEQDKHNEKVDENKLNNNSNNNNEQNKYDNLKILDHIPGYDFHTTLEECDEISNYFDKDLTDDELYEKYKVPHNLLLSKGMLFDIKQKDSKTSNCVTKSYGKFIEGTGSIIQMDNNFKADINDNKSLIPLKLRYFSPKEITRLHGFPEEFKFSPKLTTIQCYRLIGNSLNVKIVSELLKVLVSPNEEEEQQEQQKEKEGKK.

The SAM-dependent MTase C5-type domain occupies 4–366 (LRVLEFYSGI…KVLVSPNEEE (363 aa)). Residue Cys-78 is part of the active site. Positions 178–192 (KKEQDKHNEKVDENK) are enriched in basic and acidic residues. The disordered stretch occupies residues 178-205 (KKEQDKHNEKVDENKLNNNSNNNNEQNK). Low complexity predominate over residues 193-203 (LNNNSNNNNEQ).

Belongs to the class I-like SAM-binding methyltransferase superfamily. C5-methyltransferase family.

The protein localises to the nucleus. The catalysed reaction is a 2'-deoxycytidine in DNA + S-adenosyl-L-methionine = a 5-methyl-2'-deoxycytidine in DNA + S-adenosyl-L-homocysteine + H(+). Involved in epigenetic gene silencing. Methylates specific cytosine residues in the retrotransposons DIRS-1 and Skipper. In Dictyostelium discoideum (Social amoeba), this protein is DNA (cytosine-5)-methyltransferase (dnmA).